The primary structure comprises 88 residues: Small ribosomal subunit protein uS15 (88 aa).

The protein belongs to the universal ribosomal protein uS15 family. In terms of assembly, part of the 30S ribosomal subunit. Forms a bridge to the 50S subunit in the 70S ribosome, contacting the 23S rRNA.

Its function is as follows. One of the primary rRNA binding proteins, it binds directly to 16S rRNA where it helps nucleate assembly of the platform of the 30S subunit by binding and bridging several RNA helices of the 16S rRNA. Forms an intersubunit bridge (bridge B4) with the 23S rRNA of the 50S subunit in the ribosome. This is Small ribosomal subunit protein uS15 from Geobacter metallireducens (strain ATCC 53774 / DSM 7210 / GS-15).